Here is a 198-residue protein sequence, read N- to C-terminus: Ribosomal RNA small subunit methyltransferase G (198 aa).

Residues Gly74, Phe79, 123-124 (IQ), and Arg136 each bind S-adenosyl-L-methionine.

Belongs to the methyltransferase superfamily. RNA methyltransferase RsmG family.

The protein localises to the cytoplasm. The catalysed reaction is guanosine(527) in 16S rRNA + S-adenosyl-L-methionine = N(7)-methylguanosine(527) in 16S rRNA + S-adenosyl-L-homocysteine. Functionally, specifically methylates the N7 position of guanine in position 527 of 16S rRNA. The sequence is that of Ribosomal RNA small subunit methyltransferase G from Orientia tsutsugamushi (strain Ikeda) (Rickettsia tsutsugamushi).